The primary structure comprises 845 residues: Synaptonemal complex protein 1 (845 aa).

The tract at residues 59–215 is interaction with SYCE3; that stretch reads ETRQVYVDLN…YQLTEEKEAQ (157 aa). 2 coiled-coil regions span residues 64–211 and 244–544; these read YVDL…LTEE and LRTE…EIEV. A required for pH-induced assembly of C-terminal ends into antiparallel tetramers region spans residues 550 to 644; sequence EKLLGEVEKA…VSLKKQLEIE (95 aa). A Nuclear localization signal motif is present at residues 553–556; it reads LGEV. Positions 620–663 form a coiled coil; the sequence is KTALETELSNIRNELVSLKKQLEIEREEKEKLKLEKENTAILKD. Residues 657 to 845 are DNA-binding; that stretch reads NTAILKDKKD…RLKEAEKLFA (189 aa). Serine 676 bears the Phosphoserine mark. Residues 684–703 are compositionally biased toward polar residues; it reads FDSKTTPSQNISRISSSMES. Residues 684–709 form a disordered region; that stretch reads FDSKTTPSQNISRISSSMESGKTKDN. The short motif at 753–756 is the Nuclear localization signal element; the sequence is KKRK. Residues 786-808 form a disordered region; it reads LYNNNSPNSHLTPKQTPLSLSTP.

In terms of assembly, structural component of synaptonemal complexes. Homotetramer that consists of an N-terminal four-helical bundle that bifurcates into two elongated C-terminal dimeric coiled coils. This tetrameric building block potentially self-assembles into a supramolecular zipper-like lattice to mediate meiotic chromosome synapsis. Self-assembly is likely initiated by local proton density at chromosome axis, which is predicted to trigger antiparallel back to back assembly of adjacent C-terminal ends into tetrameric structures that anchor to chromosomal DNA. Then the N-terminal ends are predicted to undergo cooperative antiparallel head to head assembly at the midline of synaptonemal complexes central element to form a zipper-like lattice between properly aligned homologous chromosomes. The nascent synapsis generated by SYCP1 is stabilized through interaction with central element proteins SYCE1 and SYCE2. Interacts (via tetrameric core) with SYCE3; the interaction remodels SYCP1 homotetramers to 2:1 heterotrimers with SYCE3. SYCP1/SYCE3 heterotrimers form lattice assemblies as part of the mature synaptonemal complex via both lateral and head-to-head interactions. Forms a complex with EWSR1, PRDM9, SYCP3 and REC8; complex formation is dependent of phosphorylated form of REC8 and requires PRDM9 bound to hotspot DNA; EWSR1 joins PRDM9 with the chromosomal axis through REC8. Interacts with SPO16.

The protein resides in the nucleus. Its subcellular location is the chromosome. It is found in the centromere. Major component of the transverse filaments of synaptonemal complexes, formed between homologous chromosomes during meiotic prophase. Required for normal assembly of the central element of the synaptonemal complexes. Required for normal centromere pairing during meiosis. Required for normal meiotic chromosome synapsis during oocyte and spermatocyte development and for normal male and female fertility. This chain is Synaptonemal complex protein 1, found in Mesocricetus auratus (Golden hamster).